The following is a 219-amino-acid chain: Response regulator ArlR (219 aa).

One can recognise a Response regulatory domain in the interval 3–116; that stretch reads NILIVEDEQN…ELFARIRAVL (114 aa). Aspartate 52 carries the 4-aspartylphosphate modification. A DNA-binding region (ompR/PhoB-type) is located at residues 122 to 219; the sequence is KDIIDINGIK…TVRGVGYVIR (98 aa).

Post-translationally, phosphorylated by ArlS.

It localises to the cytoplasm. Its function is as follows. Member of the two-component regulatory system ArlS/ArlR. This is Response regulator ArlR (arlR) from Staphylococcus haemolyticus (strain JCSC1435).